A 759-amino-acid polypeptide reads, in one-letter code: Rho GTPase-activating protein 26 (759 aa).

One can recognise a BAR domain in the interval 7-262 (EFSDCYLDSP…MKENPHEHLA (256 aa)). The PH domain occupies 265-369 (PYTMEGYLYV…WMEAMDGREP (105 aa)). A Rho-GAP domain is found at 383–568 (AQLDNIGFSI…IIIENYEKMF (186 aa)). The interval 578–701 (NSQLHLSRKR…STSSDSSPVS (124 aa)) is disordered. Residues 608-617 (HNTEKEEKRN) show a composition bias toward basic and acidic residues. A compositionally biased stretch (low complexity) spans 618–637 (SVNSSAESVSSSNANSSANS). Residues 638–650 (TCTQCSNMNNLNA) show a composition bias toward polar residues. The span at 679–701 (PMFSAPSSPMPTSSTSSDSSPVS) shows a compositional bias: low complexity. Positions 701-759 (SVPRKAKALYACKAEHDSELSFSAGTVFDNVYPSQEPGWLEGILNGKTGLIPENYVEFL) constitute an SH3 domain.

It is found in the cell junction. Its subcellular location is the focal adhesion. The protein resides in the cytoplasm. The protein localises to the cytoskeleton. It localises to the endosome membrane. Functionally, GTPase-activating protein for rhoa and cdc42. The polypeptide is Rho GTPase-activating protein 26 (arhgap26) (Xenopus tropicalis (Western clawed frog)).